A 261-amino-acid chain; its full sequence is MPQNEYIERWQKQHGKRFDHDERKRKRIAREGHDGSKKAQNYRGLRAKLYAEKRRKEKIQMKKTIRAHEERNVKTSEPAEPSTEALPQYLLDRSNEKNAKALSSAIKQKRNEKAARFSVPLPKVKGISEEEMFSVVKTGKKTAKKSWKRMITKPTFVGPGFTRRPVKYERFIRPMGLRYKKANVTHPELSVTVQLPIISVKKNPQNPLYTQLGVLTKGTIIEVNVSELGLVTAGGKVVWGRYAQITNNPENDGCLNAVLLV.

2 stretches are compositionally biased toward basic and acidic residues: residues 1–22 and 49–74; these read MPQN…DHDE and LYAE…RNVK. The disordered stretch occupies residues 1–84; that stretch reads MPQNEYIERW…TSEPAEPSTE (84 aa). Positions 15–22 match the Nuclear localization signal motif; it reads GKRFDHDE.

The protein belongs to the eukaryotic ribosomal protein eS8 family. Ribosome biogenesis protein NSA2 subfamily. In terms of assembly, component of the pre-66S ribosomal particle. Interacts with NOP7 and RRP1. Interacts with RSA4 (via WD repeats).

The protein localises to the nucleus. It localises to the nucleolus. Involved in the biogenesis of the 60S ribosomal subunit. May play a part in the quality control of pre-60S particles. This Phaeosphaeria nodorum (strain SN15 / ATCC MYA-4574 / FGSC 10173) (Glume blotch fungus) protein is Ribosome biogenesis protein NSA2 (NSA2).